Here is a 368-residue protein sequence, read N- to C-terminus: Trans-enoyl reductase TwmE (368 aa).

49–52 contacts NADP(+); that stretch reads SDYK. Residue 135–142 coordinates substrate; it reads FKAATLGT. NADP(+)-binding positions include 204–207, Y222, and 269–270; these read SPRS and LE. 290–294 contributes to the substrate binding site; that stretch reads SAELY. 360–361 provides a ligand contact to NADP(+); it reads HP.

Belongs to the zinc-containing alcohol dehydrogenase family. Monomer.

Its pathway is secondary metabolite biosynthesis. Trans-enoyl reductase; part of the gene cluster that mediates the biosynthesis of wortmanamides A and B, reduced long-chain polyketides amidated with a specific omega-amino acid, 5-aminopentanoic acid (5PA). The PKS modules of TwmB are involved in the synthesis of the polyketide backbone, whereas the non-canonical C domain of TwmB is a bonafide condensation domain that specifically selects 5PA and catalyzes amidation to release polyketide chain. The C domain clearly prefers C16 and C18 fatty acyl substrates, which is consistent with simultaneous formation of both octaketide and nonaketide acyl amides wortmanamides A and B. Because TwmB lacks a designated enoylreductase (ER) domain, the required activity is provided the enoyl reductase TwmE. The roles of the remaining enzymes have still to be clarified. The chain is Trans-enoyl reductase TwmE from Talaromyces wortmannii (Penicillium wortmannii).